A 305-amino-acid chain; its full sequence is Protoheme IX farnesyltransferase 1 (305 aa).

Transmembrane regions (helical) follow at residues 22–42, 53–73, 94–114, 115–135, 154–174, 179–199, 230–250, and 283–303; these read IKTG…TLAL, IPEI…AGAF, VTGD…TIFG, LVFL…GLFL, IGSV…YPDV, IIGL…AIAI, LVIL…LMLV, and LFHM…GIFF.

This sequence belongs to the UbiA prenyltransferase family. Protoheme IX farnesyltransferase subfamily. In terms of assembly, interacts with CtaA.

It is found in the cell membrane. The enzyme catalyses heme b + (2E,6E)-farnesyl diphosphate + H2O = Fe(II)-heme o + diphosphate. The protein operates within porphyrin-containing compound metabolism; heme O biosynthesis; heme O from protoheme: step 1/1. Its function is as follows. Converts heme B (protoheme IX) to heme O by substitution of the vinyl group on carbon 2 of heme B porphyrin ring with a hydroxyethyl farnesyl side group. The protein is Protoheme IX farnesyltransferase 1 of Bacillus cytotoxicus (strain DSM 22905 / CIP 110041 / 391-98 / NVH 391-98).